The chain runs to 444 residues: Light-independent protochlorophyllide reductase subunit N (444 aa).

Residues C36, C61, and C118 each coordinate [4Fe-4S] cluster.

Belongs to the BchN/ChlN family. In terms of assembly, protochlorophyllide reductase is composed of three subunits; BchL, BchN and BchB. Forms a heterotetramer of two BchB and two BchN subunits. The cofactor is [4Fe-4S] cluster.

The enzyme catalyses chlorophyllide a + oxidized 2[4Fe-4S]-[ferredoxin] + 2 ADP + 2 phosphate = protochlorophyllide a + reduced 2[4Fe-4S]-[ferredoxin] + 2 ATP + 2 H2O. Its pathway is porphyrin-containing compound metabolism; bacteriochlorophyll biosynthesis (light-independent). Component of the dark-operative protochlorophyllide reductase (DPOR) that uses Mg-ATP and reduced ferredoxin to reduce ring D of protochlorophyllide (Pchlide) to form chlorophyllide a (Chlide). This reaction is light-independent. The NB-protein (BchN-BchB) is the catalytic component of the complex. In Chloroflexus aurantiacus (strain ATCC 29366 / DSM 635 / J-10-fl), this protein is Light-independent protochlorophyllide reductase subunit N.